The sequence spans 365 residues: Fatty acid hydroxylase vlmA (365 aa).

Residues 20-41 are disordered; the sequence is TTIKRRQNDKTKTPKTKPVSKI. An N-linked (GlcNAc...) asparagine glycan is attached at Asn47. A run of 4 helical transmembrane segments spans residues 62 to 82, 89 to 109, 144 to 164, and 179 to 199; these read ILLQSLLPITVHQLTTLVLSI, VHPFLLRLCVIIGYGYAFRFL, LNWSLPLTVGSRTVMCVLVAY, and WWAWLAVYLSLYPIILDFYYY. The region spanning 189–335 is the Fatty acid hydroxylase domain; it reads LYPIILDFYY…TRIWDRLFGT (147 aa).

Belongs to the sterol desaturase family. TMEM195 subfamily.

It localises to the membrane. It functions in the pathway secondary metabolite biosynthesis. Functionally, fatty acid hydroxylase; part of the gene cluster that mediates the biosynthesis of verlamelin, a lipopeptide that exhibits antifungal activity against plant pathogenic fungi. Verlamelin is a cyclic hexadepsipeptide and is bridged by ester bonding between a 5-hydroxytetradecanoic acid moiety and a carboxyl group on the terminal Val of amide-bonded tetradecanoyl-hexapeptide D-allo-Thr-D-Ala-L-Pro-L-Gln-D-Tyr-L-Val. VlmA and vlmB are altogether regarded as essential components in the biosynthesis of 5-hydroxytetradecanoic acid. VlmA catalyzes the hydroxylation at position C5 of tetradecanoic acid produced in primary metabolism, while the precise function of vlmB still remains to be solved. To be loaded onto the waiting NRPS, 5-hydroxytetradecanoic acid is activated in the form of acyladenylate by the AMP-dependent ligase vlmC. VlmS seems to accept the fatty-acyl intermediate onto the initial module to further elongate amino acid residues by the downstream modules. In addition, in the last module at its C-terminus, vlmS contains a surplus condensation (C) domain that may be involved in cyclization, the last step to form verlamelin. The chain is Fatty acid hydroxylase vlmA from Lecanicillium sp.